The chain runs to 157 residues: Crossover junction endodeoxyribonuclease RuvC (157 aa).

Catalysis depends on residues Asp7, Glu67, and Asp140. Asp7, Glu67, and Asp140 together coordinate Mg(2+).

It belongs to the RuvC family. As to quaternary structure, homodimer which binds Holliday junction (HJ) DNA. The HJ becomes 2-fold symmetrical on binding to RuvC with unstacked arms; it has a different conformation from HJ DNA in complex with RuvA. In the full resolvosome a probable DNA-RuvA(4)-RuvB(12)-RuvC(2) complex forms which resolves the HJ. Mg(2+) serves as cofactor.

The protein localises to the cytoplasm. The catalysed reaction is Endonucleolytic cleavage at a junction such as a reciprocal single-stranded crossover between two homologous DNA duplexes (Holliday junction).. Functionally, the RuvA-RuvB-RuvC complex processes Holliday junction (HJ) DNA during genetic recombination and DNA repair. Endonuclease that resolves HJ intermediates. Cleaves cruciform DNA by making single-stranded nicks across the HJ at symmetrical positions within the homologous arms, yielding a 5'-phosphate and a 3'-hydroxyl group; requires a central core of homology in the junction. The consensus cleavage sequence is 5'-(A/T)TT(C/G)-3'. Cleavage occurs on the 3'-side of the TT dinucleotide at the point of strand exchange. HJ branch migration catalyzed by RuvA-RuvB allows RuvC to scan DNA until it finds its consensus sequence, where it cleaves and resolves the cruciform DNA. This is Crossover junction endodeoxyribonuclease RuvC from Rickettsia rickettsii (strain Iowa).